The primary structure comprises 201 residues: UPF0301 protein R00917 (201 aa).

The protein belongs to the UPF0301 (AlgH) family.

The polypeptide is UPF0301 protein R00917 (Rhizobium meliloti (strain 1021) (Ensifer meliloti)).